A 359-amino-acid chain; its full sequence is Dihydroorotate dehydrogenase (quinone) (359 aa).

FMN is bound by residues 61 to 65 and T85; that span reads AGYDK. Position 65 (K65) interacts with substrate. 110 to 114 is a substrate binding site; sequence NRLGF. Residues N139 and N170 each contribute to the FMN site. N170 contributes to the substrate binding site. The active-site Nucleophile is the S173. A substrate-binding site is contributed by N175. FMN is bound by residues K211 and S239. 240 to 241 is a substrate binding site; sequence NT. FMN contacts are provided by residues G262, G291, and 312–313; that span reads YT.

The protein belongs to the dihydroorotate dehydrogenase family. Type 2 subfamily. In terms of assembly, monomer. FMN is required as a cofactor.

It is found in the cell membrane. The enzyme catalyses (S)-dihydroorotate + a quinone = orotate + a quinol. It participates in pyrimidine metabolism; UMP biosynthesis via de novo pathway; orotate from (S)-dihydroorotate (quinone route): step 1/1. Functionally, catalyzes the conversion of dihydroorotate to orotate with quinone as electron acceptor. The polypeptide is Dihydroorotate dehydrogenase (quinone) (Mesorhizobium japonicum (strain LMG 29417 / CECT 9101 / MAFF 303099) (Mesorhizobium loti (strain MAFF 303099))).